Consider the following 423-residue polypeptide: Glutamyl-tRNA reductase (423 aa).

Residues 51–54 (TCNR), S99, 104–106 (EDQ), and Q110 contribute to the substrate site. C52 functions as the Nucleophile in the catalytic mechanism. NADP(+) is bound at residue 179 to 184 (GSGEMG).

Belongs to the glutamyl-tRNA reductase family. In terms of assembly, homodimer.

The enzyme catalyses (S)-4-amino-5-oxopentanoate + tRNA(Glu) + NADP(+) = L-glutamyl-tRNA(Glu) + NADPH + H(+). The protein operates within porphyrin-containing compound metabolism; protoporphyrin-IX biosynthesis; 5-aminolevulinate from L-glutamyl-tRNA(Glu): step 1/2. Catalyzes the NADPH-dependent reduction of glutamyl-tRNA(Glu) to glutamate 1-semialdehyde (GSA). The chain is Glutamyl-tRNA reductase from Methanoculleus marisnigri (strain ATCC 35101 / DSM 1498 / JR1).